The chain runs to 1605 residues: MTGPTKISILGQESIVADFGLWRNYVAKDLISGCPSTTYVLITDTNIGSIYTPGFQKSFEEAAASVSPSPRLLIYNAPPGEVSKSRQTKADIEDWMLSQSPPCGRDTVVIALGGGVIGDLTGFVAATYMRGVRFVQVPTTLLAMVDSSIGGKTAIDTPLGKNLIGAIWQPSRIYIDLEFLETLPVREFINGMAEVIKTAAISSEEEFTALEDNAETILSAVRREVKPGQRRFEGIEEILKARILASARHKAFVVSADEREGGLRNLLNWGHSIGHAIEAILTPQILHGECVAIGMVKEAELARHLGILKGVAVARIVKCIAAYGLPTSLKDSRIRKLTAGKHCSVDQILFNMALDKKNDGPKKKIVLLSAIGRTYEPRASVVPNEDIGVVLAPSIEVHPGVSTTSEVVCAPPGSKSISNRALVLAALGSGTVRIKNLLHSDDTEVMLNALERLGAATFSWEEEGEVLVVNGKGGALQAHPSPLYLGNAGTASRFLTTVATLATASSVDSSVLTGNNRMKQRPIGDLVDALTANGAQIEYVENKGSLPLKIAASGGFTGGQINLAAKVSSQYVSSLLMCAPYAKEPVTLKLVGGKPISQPYIDMTTAMMRSFGIDVKKSTTEEHTYHIPQGRYINPAEYVVESDASSATYPLAIAAVTGTTCTIPNIGSKSLQGDARFAVDVLRPMGCTVEQTDTSTTVTGPADGVLRPLPNVDMEPMTDAFLGASVLAAIARGKDSNHTTRIYGIANQRVKECNRIKAMHDELAKFGVVCREHDDGLEIDGIDRSTLRQPAGGVFCYDDHRVAFSFSVLSLIAPKPTLILEKECVGKTWPGWWDTLRQKFAVKLEGKELKEAESPVLTRAEKASASVFIIGMRGAGKTTSGHWVASTLKRPFIDLDDELERIEGMTIPDIIKQRGWQGFRDAELNLLQRTMKERPTGHVFACGGGVVEIPEARKLLIDWHKTKGNVLLIMRDIKQVMAFLNIDKTRPAYVEDMLGVWLRRKPWFQECSNIQYYSQHASAGLPRASEDFARFIKFVTGLEDSLGTIKKKQHSFFVSLTLPDVRGADQILEQACVGSDAVELRVDLLEDPDSSNGIPTVDFVADQISYLRSRITLPVIFTIRTKGQGGRFPDDAHAEAMQLYRLAVRSGCEFVDLEIAFPDEMLRAVTEMKGYSKIIASHHDPNGELSWANMSWMKYYNRALEYGDVIKLVGVARNLDDNTALRKFKNWAEEAHDVPLIAINMGGNGQLSRILNGFMTPVSHPALPFRAAPGQLSATDIRKGLSLMGEIKKKRFALFGSPISESRSPALHNTLFAEMGLPHEYTRLETANVEDVKDFIRAPDFGGASVTIPLKLDIMPLLDEITAEAEIIGAVNTVVPVSDGEGKPQRLVGHNTDWQGMVQCLRNAGAYGADGSASALVVGGGGTSRAAIYALHQMGFSPIYIVGRNPAKLESMVSTFPTSYNIQIVEGNEKLEHVPHVAIGTIPADRPIDPGMREILCHMFERAQEADADASRTIEGSPRVLLEMAYKPRVTALMQLAVDAGWTTIPGLEALIGQGVHQVGLIDLLQMDITDGVQFQHWTGIRPLYERARVCCDILLSGRTMLTCS.

A 3-dehydroquinate synthase region spans residues 1–384 (MTGPTKISIL…YEPRASVVPN (384 aa)). Residues 44–46 (DTN), 81–84 (EVSK), 114–116 (GGV), and Asp119 contribute to the NAD(+) site. Arg130 contacts 7-phospho-2-dehydro-3-deoxy-D-arabino-heptonate. 139-140 (TT) provides a ligand contact to NAD(+). Positions 146 and 152 each coordinate 7-phospho-2-dehydro-3-deoxy-D-arabino-heptonate. NAD(+) is bound at residue Lys161. Asn162 is a binding site for 7-phospho-2-dehydro-3-deoxy-D-arabino-heptonate. NAD(+) contacts are provided by residues 179–182 (FLET) and Asn190. A Zn(2+)-binding site is contributed by Glu194. 7-phospho-2-dehydro-3-deoxy-D-arabino-heptonate is bound by residues 194–197 (EVIK) and Lys250. Residue Glu260 is the Proton acceptor; for 3-dehydroquinate synthase activity of the active site. 7-phospho-2-dehydro-3-deoxy-D-arabino-heptonate-binding positions include 264-268 (RNLLN) and His271. Residue His271 participates in Zn(2+) binding. His275 functions as the Proton acceptor; for 3-dehydroquinate synthase activity in the catalytic mechanism. The 7-phospho-2-dehydro-3-deoxy-D-arabino-heptonate site is built by His287 and Lys356. Position 287 (His287) interacts with Zn(2+). The segment at 397–842 (VHPGVSTTSE…WDTLRQKFAV (446 aa)) is EPSP synthase. Catalysis depends on Cys824, which acts as the For EPSP synthase activity. The interval 864 to 1055 (SASVFIIGMR…KKKQHSFFVS (192 aa)) is shikimate kinase. Position 871–878 (871–878 (GMRGAGKT)) interacts with ATP. Positions 1056 to 1276 (LTLPDVRGAD…AAPGQLSATD (221 aa)) are 3-dehydroquinase. The active-site Proton acceptor; for 3-dehydroquinate dehydratase activity is the His1179. Residue Lys1207 is the Schiff-base intermediate with substrate; for 3-dehydroquinate dehydratase activity of the active site. Positions 1289-1605 (KKRFALFGSP…LSGRTMLTCS (317 aa)) are shikimate dehydrogenase.

It in the N-terminal section; belongs to the sugar phosphate cyclases superfamily. Dehydroquinate synthase family. The protein in the 2nd section; belongs to the EPSP synthase family. In the 3rd section; belongs to the shikimate kinase family. This sequence in the 4th section; belongs to the type-I 3-dehydroquinase family. It in the C-terminal section; belongs to the shikimate dehydrogenase family. In terms of assembly, homodimer. Zn(2+) serves as cofactor.

It localises to the cytoplasm. The enzyme catalyses 7-phospho-2-dehydro-3-deoxy-D-arabino-heptonate = 3-dehydroquinate + phosphate. The catalysed reaction is 3-dehydroquinate = 3-dehydroshikimate + H2O. It carries out the reaction shikimate + NADP(+) = 3-dehydroshikimate + NADPH + H(+). It catalyses the reaction shikimate + ATP = 3-phosphoshikimate + ADP + H(+). The enzyme catalyses 3-phosphoshikimate + phosphoenolpyruvate = 5-O-(1-carboxyvinyl)-3-phosphoshikimate + phosphate. The protein operates within metabolic intermediate biosynthesis; chorismate biosynthesis; chorismate from D-erythrose 4-phosphate and phosphoenolpyruvate: step 2/7. It participates in metabolic intermediate biosynthesis; chorismate biosynthesis; chorismate from D-erythrose 4-phosphate and phosphoenolpyruvate: step 3/7. Its pathway is metabolic intermediate biosynthesis; chorismate biosynthesis; chorismate from D-erythrose 4-phosphate and phosphoenolpyruvate: step 4/7. It functions in the pathway metabolic intermediate biosynthesis; chorismate biosynthesis; chorismate from D-erythrose 4-phosphate and phosphoenolpyruvate: step 5/7. The protein operates within metabolic intermediate biosynthesis; chorismate biosynthesis; chorismate from D-erythrose 4-phosphate and phosphoenolpyruvate: step 6/7. In terms of biological role, the AROM polypeptide catalyzes 5 consecutive enzymatic reactions in prechorismate polyaromatic amino acid biosynthesis. This chain is Pentafunctional AROM polypeptide, found in Aspergillus fumigatus (strain CBS 144.89 / FGSC A1163 / CEA10) (Neosartorya fumigata).